A 728-amino-acid chain; its full sequence is Phosphoribosylformylglycinamidine synthase subunit PurL (728 aa).

His-42 is a catalytic residue. Residues Tyr-45 and Lys-84 each contribute to the ATP site. Glu-86 is a binding site for Mg(2+). Substrate-binding positions include 87–90 (SHNH) and Arg-109. His-88 serves as the catalytic Proton acceptor. Asp-110 serves as a coordination point for Mg(2+). Residue Gln-237 participates in substrate binding. Residue Asp-265 participates in Mg(2+) binding. 309–311 (ESQ) is a binding site for substrate. 2 residues coordinate ATP: Asp-491 and Gly-528. Asn-529 contacts Mg(2+). Ser-531 provides a ligand contact to substrate.

Belongs to the FGAMS family. In terms of assembly, monomer. Part of the FGAM synthase complex composed of 1 PurL, 1 PurQ and 2 PurS subunits.

It is found in the cytoplasm. It carries out the reaction N(2)-formyl-N(1)-(5-phospho-beta-D-ribosyl)glycinamide + L-glutamine + ATP + H2O = 2-formamido-N(1)-(5-O-phospho-beta-D-ribosyl)acetamidine + L-glutamate + ADP + phosphate + H(+). The protein operates within purine metabolism; IMP biosynthesis via de novo pathway; 5-amino-1-(5-phospho-D-ribosyl)imidazole from N(2)-formyl-N(1)-(5-phospho-D-ribosyl)glycinamide: step 1/2. In terms of biological role, part of the phosphoribosylformylglycinamidine synthase complex involved in the purines biosynthetic pathway. Catalyzes the ATP-dependent conversion of formylglycinamide ribonucleotide (FGAR) and glutamine to yield formylglycinamidine ribonucleotide (FGAM) and glutamate. The FGAM synthase complex is composed of three subunits. PurQ produces an ammonia molecule by converting glutamine to glutamate. PurL transfers the ammonia molecule to FGAR to form FGAM in an ATP-dependent manner. PurS interacts with PurQ and PurL and is thought to assist in the transfer of the ammonia molecule from PurQ to PurL. This chain is Phosphoribosylformylglycinamidine synthase subunit PurL, found in Campylobacter jejuni subsp. jejuni serotype O:2 (strain ATCC 700819 / NCTC 11168).